Here is a 584-residue protein sequence, read N- to C-terminus: Leucine-rich repeat and fibronectin type III domain-containing protein 1 (584 aa).

The signal sequence occupies residues Met-1–Ala-17. Residues Gln-18–Arg-51 form the LRRNT domain. The Extracellular segment spans residues Gln-18–Met-494. LRR repeat units follow at residues Lys-52 to Asn-73, Ser-76 to Gly-97, Ser-100 to Gly-121, Asn-124 to Glu-145, Thr-149 to Arg-170, Asn-173 to Leu-194, and Lys-197 to Gln-218. N-linked (GlcNAc...) asparagine glycosylation is present at Asn-73. The LRRCT domain maps to Asn-241–Pro-287. Positions Pro-288–His-375 constitute an Ig-like domain. Cys-310 and Cys-359 are disulfide-bonded. N-linked (GlcNAc...) asparagine glycosylation is found at Asn-332, Asn-341, Asn-384, Asn-408, and Asn-421. The disordered stretch occupies residues Asp-393 to Ser-414. Residues Ser-397–Asp-409 are compositionally biased toward low complexity. Residues Ile-495 to Ile-515 form a helical membrane-spanning segment. Residues Arg-516–Phe-584 are Cytoplasmic-facing. The disordered stretch occupies residues His-539–Gly-564. The span at Val-540–Lys-553 shows a compositional bias: polar residues.

The protein belongs to the LRFN family.

Its subcellular location is the membrane. It is found in the synapse. In terms of biological role, involved in the regulation of excitatory synapses. This chain is Leucine-rich repeat and fibronectin type III domain-containing protein 1 (lrfn1), found in Danio rerio (Zebrafish).